The primary structure comprises 494 residues: 3-octaprenyl-4-hydroxybenzoate carboxy-lyase (494 aa).

Asn-172 contacts Mn(2+). Residues 175–177, 189–191, and 194–195 each bind prenylated FMN; these read IYR, RWL, and RG. Position 238 (Glu-238) interacts with Mn(2+). The active-site Proton donor is Asp-287.

The protein belongs to the UbiD family. As to quaternary structure, homohexamer. The cofactor is prenylated FMN. Requires Mn(2+) as cofactor.

It is found in the cell membrane. The catalysed reaction is a 4-hydroxy-3-(all-trans-polyprenyl)benzoate + H(+) = a 2-(all-trans-polyprenyl)phenol + CO2. It functions in the pathway cofactor biosynthesis; ubiquinone biosynthesis. Functionally, catalyzes the decarboxylation of 3-octaprenyl-4-hydroxy benzoate to 2-octaprenylphenol, an intermediate step in ubiquinone biosynthesis. The chain is 3-octaprenyl-4-hydroxybenzoate carboxy-lyase from Cronobacter sakazakii (strain ATCC BAA-894) (Enterobacter sakazakii).